The primary structure comprises 293 residues: Probable chromosome 2-partitioning protein ParB (293 aa).

The protein belongs to the ParB family.

Involved in chromosome partition. Localize to both poles of the predivisional cell following completion of DNA replication. Binds to the DNA origin of replication. The protein is Probable chromosome 2-partitioning protein ParB (parB2) of Deinococcus radiodurans (strain ATCC 13939 / DSM 20539 / JCM 16871 / CCUG 27074 / LMG 4051 / NBRC 15346 / NCIMB 9279 / VKM B-1422 / R1).